The primary structure comprises 2609 residues: MSEFKQQELFWSNMFDAEDRLIAFPSFHMSDSALEHDALNTSNSIHTSLRSDVSLRIMTMAIIPMAVYLVLLVGIKCLLHKYTGEESIIVGVPTFEDETDEDLRLDQIMLLKQNINENSTFKSIFNEFKHTLNDAILHQDVPFDKMVGPLNLNYNSNHLPMIPAIVSLDQIHLIHFKETAASDTLFQFDIKNDAIHLKVTYNEQAYDRQYMMQVIEHLNRLFSIILFQPDITISQLNILTDTEINTFKDYNQTAAEYPREKTIHQLFEEQANRTPDQVAVVYEENQLTYQELNEKANQIARTLQSEGVHPDQPVGIMAERSLEMIVGLFGILKAGGAYVPIDPTYPEERIRYILEDSDTKLLLVQHHLREKVPFTGKVLDMEDPQTFSEDGSNLESISGPNQLAYVIYTSGSTGKPKGVMVEHRSVINRLVWMQENYPLDERDAILQKTAITFDVSVWELFWWSIVGSKVVLLPNGGEKNPELILDTIEQKGVSTLHFVPAMLHAFLESMEQTPSGKLKRKLASLRYVFASGEALTPKHVDGFQRIITPVSHAQIINLYGPTEATIDVSYFECEADKRYNSVPIGKPISNIQLYILQAGYMQPVGVAGELCIAGDGLARGYLNRPELTAEKFVKNPFSAGERMYRTGDLARWLPDGNIEYLGRIDHQVKIRGYRIETGEVEAALFHIPSIQESIVLAQEINEEISLCAYYTANDTLTAGELREHLSRQLPSYMIPAYFIQLKRMPLTLNGKIDRRALPSPRENLTGMDYTAPRTELEKILAATWESVLGLERVGVSDHFFELGGDSIKSIQVSSRLYQAGYKFEIKHLFKYPTISELVPYVEPVTRVAEQGEIKGPALLTPIQHWFFDQRYPDLHHYNQAVMLYWKEGLNVPMLREVMRKIVEHHDALRMVYVPAKHGYEARNREIDEGDLFSLEVFSLLEENNVAQTIETLSNEIQQSIQLAEGPLIKLGLFQCQDGDHLLIVAHHLVIDGVSWRILIEDIAAAYEQLLNGEAIQLPKKTDSYLLWAEQLKRYAESPEFEMKNQYWFQHEHIPLPKLPKDNEQEIGLAEDRETIIVQWTAEETERLLKNAHRAYTTEMNDLLLTGLGIAIHRWTGHEDILIHLEGHGRESIIPDLDISRTVGWFTSQYPVFLPIKADHDISQRIKTVKEHLRKIPQKGIGYGIIKYLSDHREDREFTGQPEISFNFLGQFDQDLQNGSIEVSPYSSGKIASDKHPLTYALDINGMISNGRLSLAISYCGKQYHKETMETCADLLKSSLRQVIEHCTAQDQVQLTPSDISLKEISIDELDQFVQQAQHLGEIENIYPLTPMQKGMLFHSLIDSASGAYFEQAAFDLKGLLDIEAFMMSLSQLAKRYDILRTQFYTEWKEQPLQIVLRHKPIETVVEDIRDMNVDQRSEFIAAFARKDKERGFNLIRDALMRVSILRTDEEKARLIWSFHHILMDGWCLPLITKEVFETYYAIIERRQPKRDAVTPYRQYIEWLDEQDHEQAAVYWRDYLDDYEGQTVLLKEPFSDQARGYQKQKLACRLGKQLTEEIKRAASQHHVTVNTWMQTAWGLLLQRYNGTQDVVFGTVVSGRPADIPGIESMVGLFINTIPVRVCAQPEMTVAQVLKMNQEHALASQPYDTFPLYEIQAQTEQKQQLINHIMVFENYPVEKQMEHMKRDHDVLDISDFHLEEHTHYDFNFIVMPAEDMEMHFVYNANVYDQATVERIQAHFMEIIKQMVNDTAVHVQELDILSEDERSLLIEKFNDTATEYPKEKTIYQLFEEQAARTPEQIAIVFEDQKLTYRQLNEQANQLARTLRAKGVRSDRTAAIISDHSIELVVGILAVLKAGGAYVPIDPDYPEQRIQYILNDSKTEIVLTQSHLQQRLAHEGTIVLLDDENSYHKERSNLERISNIKDLAYVIYTSGSTGKPKGVLIEHQGLTNYIWWADRVYVKGEKTTFPLYSSIAFDLTVTSIFTPLISGNAIIVYGDKDRTTLLSSIIEDSRVDIIKLTPAHLQLLKEMNISPECTIRKMIVGGDNLSTRLAQNISEQFQDQIEIFNEYGPTETVVGCMIYLYDPKKDRQESVPIGTAAANMNIYLLDTGMKPVPIGVPGEMYISGAGVARGYLNRPDLTAEKFVEHPFAAGERMYKTGDAARWMPDGHMEYLGRIDHQVKVRGYRIELGEVEAALLLVESVKEAVVIAVEEEGSNQLCAYVTGDESLKTLQLKQQLQNKLPAYMIPAYFVQIEEMPLTANGKIDREALPAPDGNMLAGTEYAAPRTLIEKQLAEIWKEVLAHSELGIKDNFFDVGGHSLKVLQLVDQINKVMGIKLHYHVVYEAPTIETMAHAIQAAALPSKTENVFVKLNQNGSIPVFCFPPLIGYGLVYNEMANRLDGDCVVYAADFTEDPSYKKPIIDRFAESMIDIQEQGPFVLLGYSSGSNLAFEVAKALEQRGRTVSDVIMLDSQITTSVTHLSEKEVEEIIHLNLDIIPVYYRELLTIPSIKEKIRGYLAYHNQLINSGTINANIHHLLCDDMTERGWTHSTAHNYKEYELKGDHVTIFDPQYIEENMSTIRSIMKCIEEQQLGELVPHEQLSYMSRTKSDRT.

The domain 1 (D-serine-activating) stretch occupies residues 258–1628; the sequence is PREKTIHQLF…RVCAQPEMTV (1371 aa). Positions 288-695 are adenylation 1; sequence TYQELNEKAN…HIPSIQESIV (408 aa). The region spanning 771-845 is the Carrier 1 domain; that stretch reads APRTELEKIL…ELVPYVEPVT (75 aa). Serine 806 bears the O-(pantetheine 4'-phosphoryl)serine mark. Residues 853–1312 form an epimerization 1 region; sequence IKGPALLTPI…EISIDELDQF (460 aa). The condensation 1 stretch occupies residues 1322-1623; it reads IENIYPLTPM…NTIPVRVCAQ (302 aa). The domain 2 (isoleucine-activating) stretch occupies residues 1778 to 2359; that stretch reads PKEKTIYQLF…AHAIQAAALP (582 aa). The tract at residues 1808 to 2205 is adenylation 2; sequence TYRQLNEQAN…LVESVKEAVV (398 aa). In terms of domain architecture, Carrier 2 spans 2282–2357; the sequence is APRTLIEKQL…TMAHAIQAAA (76 aa). Position 2317 is an O-(pantetheine 4'-phosphoryl)serine (serine 2317). Positions 2375–2581 are thioesterase; that stretch reads IPVFCFPPLI…ENMSTIRSIM (207 aa).

It belongs to the ATP-dependent AMP-binding enzyme family. Pantetheine 4'-phosphate serves as cofactor.

In terms of biological role, this protein is a multifunctional enzyme, able to activate and polymerize the amino acids Ser and Asn as part of the synthesis of mycosubtilin. The Ser residue is further epimerized to the D-isomer form. The activation sites for these amino acids consist of individual domains. The polypeptide is Mycosubtilin synthase subunit C (mycC) (Bacillus subtilis).